The primary structure comprises 181 residues: Cell division protein SepF (181 aa).

Over residues 18–27 the composition is skewed to acidic residues; the sequence is EDYLDDDDYD. The interval 18-42 is disordered; it reads EDYLDDDDYDDGRAVGHDDRRAMHE. Over residues 28–42 the composition is skewed to basic and acidic residues; it reads DGRAVGHDDRRAMHE.

It belongs to the SepF family. As to quaternary structure, homodimer. Interacts with FtsZ.

The protein localises to the cytoplasm. Its function is as follows. Cell division protein that is part of the divisome complex and is recruited early to the Z-ring. Probably stimulates Z-ring formation, perhaps through the cross-linking of FtsZ protofilaments. Its function overlaps with FtsA. The polypeptide is Cell division protein SepF (Frankia alni (strain DSM 45986 / CECT 9034 / ACN14a)).